The chain runs to 571 residues: Tail sheath protein (571 aa).

Belongs to the myoviridae tail sheath protein family. In terms of assembly, homomultimer.

It is found in the virion. It localises to the host cytoplasm. Polymerizes as an extended structure around the baseplate-tail tube complex. During ejection, the sheath shifts to a contracted form, thereby making the inner tail tube protrude through the host cell envelope. This chain is Tail sheath protein, found in Bacillus subtilis (Bacteriophage SP01).